A 358-amino-acid polypeptide reads, in one-letter code: Presenilin hop-1 (358 aa).

At 1 to 12 (MPRTKRVYSGKT) the chain is on the cytoplasmic side. Residues 13-33 (ITGVLYPVAICMLFVAINVKL) form a helical membrane-spanning segment. The Lumenal segment spans residues 34–57 (SQPEQQEQSKVVYGLFHSYDTADS). The chain crosses the membrane as a helical span at residues 58–78 (GTITLYLIGFLILTTSLGVFC). The Cytoplasmic portion of the chain corresponds to 79-86 (YQMKFYKA). Residues 87–107 (IKVYVLANSIGILLVYSVFHF) form a helical membrane-spanning segment. Over 108–115 (QRIAEAQS) the chain is Lumenal. A helical transmembrane segment spans residues 116–136 (IPVSVPTFFFLILQFGGLGIT). Over 137-148 (CLHWKSHRRLHQ) the chain is Cytoplasmic. A helical membrane pass occupies residues 149–169 (FYLIMLAGLTAIFILNILPDW). A topological domain (lumenal) is located at residue T170. Residues 171–191 (VWMALTAISFWDIVAVLTPCG) traverse the membrane as a helical segment. Residue D182 is part of the active site. The Cytoplasmic portion of the chain corresponds to 192 to 273 (PLKMLVETAN…EVREVEGTIR (82 aa)). The segment covering 221-240 (EVDSPDTTRSNSTPLTEFNN) has biased composition (polar residues). Positions 221–242 (EVDSPDTTRSNSTPLTEFNNSS) are disordered. Residues 274 to 294 (LGMGDFVFYSLMLGNTVQTCP) traverse the membrane as a helical segment. D278 is a catalytic residue. Topologically, residues 295–297 (LPT) are lumenal. The chain crosses the membrane as a helical span at residues 298–318 (VVACFVSNLVGLTITLPIVTL). At 319-321 (SQT) the chain is on the cytoplasmic side. The helical intramembrane region spans 322–342 (ALPALPFPLAIAAIFYFSSHI). Positions 324-326 (PAL) match the PAL motif. Residues 343–358 (ALTPFTDLCTSQLILI) lie on the Cytoplasmic side of the membrane.

It belongs to the peptidase A22A family. As to quaternary structure, homodimer. Component of the gamma-secretase complex, a complex probably composed of the presenilin homodimer (sel-12, hop-1 or spe-4), nicastrin (aph-2), aph-1 and pen-2. As to expression, weakly expressed.

The protein resides in the endoplasmic reticulum membrane. The protein localises to the golgi apparatus membrane. Functionally, probable catalytic subunit of the gamma-secretase complex, an endoprotease complex that catalyzes the intramembrane cleavage of integral membrane proteins such as Notch receptors (lin-12 or glp-1). Probably works redundantly of lin-12, which provides more presenilin function. This is Presenilin hop-1 (hop-1) from Caenorhabditis elegans.